The chain runs to 226 residues: Exosome complex component rrp46 (226 aa).

Residues 205–226 (NESDGHENEKNPKEDVEMDVVA) form a disordered region. The segment covering 207–219 (SDGHENEKNPKED) has biased composition (basic and acidic residues).

This sequence belongs to the RNase PH family. In terms of assembly, component of the RNA exosome complex. Specifically part of the catalytically inactive RNA exosome core complex (Exo-9) which may associate with the catalytic subunits rrp6 and dis3 in cytoplasmic- and nuclear-specific RNA exosome complex forms. Exo-9 is formed by a hexameric base ring of RNase PH domain-containing subunits and a cap ring consisting of csl4, rrp4 and rrp40.

The protein resides in the cytoplasm. It is found in the nucleus. Its subcellular location is the nucleolus. Its function is as follows. Non-catalytic component of the RNA exosome complex which has 3'-&gt;5' exoribonuclease activity and participates in a multitude of cellular RNA processing and degradation events. In the nucleus, the RNA exosome complex is involved in proper maturation of stable RNA species such as rRNA, snRNA and snoRNA, in the elimination of RNA processing by-products and non-coding 'pervasive' transcripts, such as antisense RNA species and cryptic unstable transcripts (CUTs), and of mRNAs with processing defects, thereby limiting or excluding their export to the cytoplasm. In the cytoplasm, the RNA exosome complex is involved in general mRNA turnover and in RNA surveillance pathways, preventing translation of aberrant mRNAs. The catalytic inactive RNA exosome core complex of 9 subunits (Exo-9) is proposed to play a pivotal role in the binding and presentation of RNA for ribonucleolysis, and to serve as a scaffold for the association with catalytic subunits and accessory proteins or complexes. ski6 is part of the hexameric ring of RNase PH domain-containing subunits proposed to form a central channel which threads RNA substrates for degradation. The protein is Exosome complex component rrp46 (rrp46) of Schizosaccharomyces pombe (strain 972 / ATCC 24843) (Fission yeast).